Reading from the N-terminus, the 398-residue chain is MSERKLFTSESVSEGHPDKIADQISDAILDAILEQDPDAHVAAETAVYTGSVHVFGEISTTAYVDINRVVRNTIAEIGYDKAEYGFSAESVGVHPSLVEQSPDIAQGVNEALEVRGSLEQDPLDLIGAGDQGLMFGFAVDETPELMPLPISLAHQLVKKLTDLRKSGELTYLRPDAKSQVTVEYDENDQPIRVDAVVISTQHDPNVTNDQLHKDVIEKVINEVIPSHYLDDQTKFFINPTGRFVIGGPQGDSGLTGRKIIVDTYGGYSRHGGGAFSGKDATKVDRSASYAARYIAKNIVAADLAKKVEVQLAYAIGVAQPVSVRVDTFGTGVIAEADLEAAVRQIFDLRPAGIINMLDLKRPIYRQTAAYGHMGRTDIDLPWERVDKVQALKDFIASK.

H16 serves as a coordination point for ATP. D18 contacts Mg(2+). Position 44 (E44) interacts with K(+). The L-methionine site is built by E57 and Q100. Positions 100-110 (QSPDIAQGVNE) are flexible loop. ATP-binding positions include 175–177 (DAK), 242–243 (RF), D251, 257–258 (RK), A274, and K278. D251 is a binding site for L-methionine. L-methionine is bound at residue K282.

This sequence belongs to the AdoMet synthase family. Homotetramer; dimer of dimers. The cofactor is Mg(2+). Requires K(+) as cofactor.

It localises to the cytoplasm. The catalysed reaction is L-methionine + ATP + H2O = S-adenosyl-L-methionine + phosphate + diphosphate. Its pathway is amino-acid biosynthesis; S-adenosyl-L-methionine biosynthesis; S-adenosyl-L-methionine from L-methionine: step 1/1. Functionally, catalyzes the formation of S-adenosylmethionine (AdoMet) from methionine and ATP. The overall synthetic reaction is composed of two sequential steps, AdoMet formation and the subsequent tripolyphosphate hydrolysis which occurs prior to release of AdoMet from the enzyme. The sequence is that of S-adenosylmethionine synthase from Streptococcus agalactiae serotype Ia (strain ATCC 27591 / A909 / CDC SS700).